Consider the following 371-residue polypeptide: tRNA-specific 2-thiouridylase MnmA (371 aa).

ATP-binding positions include 13–20 and Met39; that span reads GMSGGVDS. The segment at 99–101 is interaction with target base in tRNA; the sequence is NPD. Residue Cys104 is the Nucleophile of the active site. Residues Cys104 and Cys200 are joined by a disulfide bond. Gly128 contributes to the ATP binding site. The interval 150-152 is interaction with tRNA; that stretch reads KDQ. The Cysteine persulfide intermediate role is filled by Cys200. The segment at 308-309 is interaction with tRNA; it reads RY.

It belongs to the MnmA/TRMU family.

The protein localises to the cytoplasm. It catalyses the reaction S-sulfanyl-L-cysteinyl-[protein] + uridine(34) in tRNA + AH2 + ATP = 2-thiouridine(34) in tRNA + L-cysteinyl-[protein] + A + AMP + diphosphate + H(+). Functionally, catalyzes the 2-thiolation of uridine at the wobble position (U34) of tRNA, leading to the formation of s(2)U34. The chain is tRNA-specific 2-thiouridylase MnmA from Listeria monocytogenes serotype 4b (strain CLIP80459).